Here is a 123-residue protein sequence, read N- to C-terminus: Galanin peptides (123 aa).

The signal sequence occupies residues 1–19; that stretch reads MPRGCALLLASLLLASALS. The propeptide occupies 20-30; that stretch reads ATLGLGSPVKE. Residue A61 is modified to Alanine amide. Residues S116 and S117 each carry the phosphoserine modification.

It belongs to the galanin family.

The protein localises to the secreted. Endocrine hormone of the central and peripheral nervous systems that binds and activates the G protein-coupled receptors GALR1, GALR2, and GALR3. This small neuropeptide may regulate diverse physiologic functions including contraction of smooth muscle of the gastrointestinal and genitourinary tract, growth hormone and insulin release and adrenal secretion. In Sus scrofa (Pig), this protein is Galanin peptides (GAL).